Reading from the N-terminus, the 640-residue chain is Probable serine/threonine-protein kinase samkA (640 aa).

The 64-residue stretch at tryptophan 21–tyrosine 84 folds into the SAM domain. A coiled-coil region spans residues phenylalanine 73–asparagine 100. Residues tyrosine 84–threonine 165 are disordered. The 247-residue stretch at tyrosine 191 to phenylalanine 437 folds into the Protein kinase domain. ATP contacts are provided by residues isoleucine 197 to valine 205 and lysine 221. Aspartate 312 serves as the catalytic Proton acceptor. The interval glutamine 448 to glutamate 482 is disordered. Positions serine 453 to threonine 465 are enriched in low complexity.

This sequence belongs to the protein kinase superfamily. Ser/Thr protein kinase family.

The catalysed reaction is L-seryl-[protein] + ATP = O-phospho-L-seryl-[protein] + ADP + H(+). It carries out the reaction L-threonyl-[protein] + ATP = O-phospho-L-threonyl-[protein] + ADP + H(+). This chain is Probable serine/threonine-protein kinase samkA (samkA), found in Dictyostelium discoideum (Social amoeba).